Here is a 429-residue protein sequence, read N- to C-terminus: 3-phosphoshikimate 1-carboxyvinyltransferase (429 aa).

3 residues coordinate 3-phosphoshikimate: Lys-11, Ser-12, and Arg-16. Position 11 (Lys-11) interacts with phosphoenolpyruvate. Residues Gly-82 and Arg-110 each coordinate phosphoenolpyruvate. Positions 155, 157, 302, and 329 each coordinate 3-phosphoshikimate. Residue Gln-157 coordinates phosphoenolpyruvate. The active-site Proton acceptor is Asp-302. Phosphoenolpyruvate contacts are provided by Arg-333 and Arg-385.

Belongs to the EPSP synthase family. In terms of assembly, monomer.

The protein resides in the cytoplasm. It carries out the reaction 3-phosphoshikimate + phosphoenolpyruvate = 5-O-(1-carboxyvinyl)-3-phosphoshikimate + phosphate. It participates in metabolic intermediate biosynthesis; chorismate biosynthesis; chorismate from D-erythrose 4-phosphate and phosphoenolpyruvate: step 6/7. Catalyzes the transfer of the enolpyruvyl moiety of phosphoenolpyruvate (PEP) to the 5-hydroxyl of shikimate-3-phosphate (S3P) to produce enolpyruvyl shikimate-3-phosphate and inorganic phosphate. The polypeptide is 3-phosphoshikimate 1-carboxyvinyltransferase (Helicobacter pylori (strain P12)).